A 420-amino-acid chain; its full sequence is MPNRRASRNAYYFFVQEKIPELRRRGLPVARVADAIPYCSADWALLKEEEKEKYAEMAREWRAAQGKDSGPSEKQKPVCTPLRKPGMLVPKQNVSPPDLSGLSLKSDQALLGGIFYFLNIFSHGELPPHCEQRFLPCEIGCVKYSLQEGIMADFHSFINPGDSSHKIPISHFESGHDQATVIENLYRFIHPNPGNWPPIYCKSDDRARVNWCLKHMAKSSEIRQDLELLTVEDLVVGIYQQKFLKEPSKTWVRSLLEVAMWDYSSNTRCKWHEENDILFCALAVCKKIANCISNSLATLFGIQLTEAHVPLQDYEASNSVTPKMVVLDAGRYQKLRVESPGFSHFSSSNQEQRSNTPTGDYPSGVKISGQNSSVRGRGITRLLESISSSSSNIHKFSNCETPVSPYTSPKHGYKSFSSLS.

Positions 4-73 (RRASRNAYYF…AQGKDSGPSE (70 aa)) form a DNA-binding region, HMG box. Disordered stretches follow at residues 62–94 (RAAQ…KQNV), 341–372 (GFSH…GQNS), and 392–420 (NIHK…SSLS). Polar residues-rich tracts occupy residues 344–358 (HFSS…NTPT) and 392–407 (NIHK…SPYT).

Belongs to the maelstrom family. As to quaternary structure, interacts with SMARCB1, SIN3B and DDX4. Interacts with piRNA-associated proteins TDRD1, PIWIL1 and PIWIL2. Interacts with TEX19.

The protein resides in the cytoplasm. Its subcellular location is the nucleus. Its function is as follows. Plays a central role during spermatogenesis by repressing transposable elements and preventing their mobilization, which is essential for the germline integrity. Acts via the piRNA metabolic process, which mediates the repression of transposable elements during meiosis by forming complexes composed of piRNAs and Piwi proteins and governs the methylation and subsequent repression of transposons. Its association with piP-bodies suggests a participation in the secondary piRNAs metabolic process. Required for the localization of germ-cell factors to the meiotic nuage. The protein is Protein maelstrom homolog (MAEL) of Bos taurus (Bovine).